The sequence spans 445 residues: Methionine aminopeptidase 2-1 (445 aa).

The disordered stretch occupies residues 1–99 (MAAQVPTEAL…FPNKAYPKGE (99 aa)). Basic residues predominate over residues 61–75 (KKKKKRKPKKKKKHP). A substrate-binding site is contributed by H198. A divalent metal cation contacts are provided by D218, D229, and H298. A substrate-binding site is contributed by H306. Positions 331 and 426 each coordinate a divalent metal cation.

It belongs to the peptidase M24A family. Methionine aminopeptidase eukaryotic type 2 subfamily. The cofactor is Co(2+). Zn(2+) is required as a cofactor. Mn(2+) serves as cofactor. Requires Fe(2+) as cofactor.

Its subcellular location is the cytoplasm. It carries out the reaction Release of N-terminal amino acids, preferentially methionine, from peptides and arylamides.. Functionally, cotranslationally removes the N-terminal methionine from nascent proteins. The N-terminal methionine is often cleaved when the second residue in the primary sequence is small and uncharged (Met-Ala-, Cys, Gly, Pro, Ser, Thr, or Val). This chain is Methionine aminopeptidase 2-1, found in Fusarium vanettenii (strain ATCC MYA-4622 / CBS 123669 / FGSC 9596 / NRRL 45880 / 77-13-4) (Fusarium solani subsp. pisi).